Consider the following 294-residue polypeptide: 4-hydroxy-tetrahydrodipicolinate synthase (294 aa).

T44 is a pyruvate binding site. Catalysis depends on Y132, which acts as the Proton donor/acceptor. Catalysis depends on K161, which acts as the Schiff-base intermediate with substrate. Position 206 (I206) interacts with pyruvate.

Belongs to the DapA family. In terms of assembly, homotetramer; dimer of dimers.

The protein resides in the cytoplasm. It catalyses the reaction L-aspartate 4-semialdehyde + pyruvate = (2S,4S)-4-hydroxy-2,3,4,5-tetrahydrodipicolinate + H2O + H(+). It participates in amino-acid biosynthesis; L-lysine biosynthesis via DAP pathway; (S)-tetrahydrodipicolinate from L-aspartate: step 3/4. Its activity is regulated as follows. Is not inhibited by (S)-lysine, in contrast to E.coli DapA. Functionally, catalyzes the condensation of (S)-aspartate-beta-semialdehyde [(S)-ASA] and pyruvate to 4-hydroxy-tetrahydrodipicolinate (HTPA). The sequence is that of 4-hydroxy-tetrahydrodipicolinate synthase from Thermotoga maritima (strain ATCC 43589 / DSM 3109 / JCM 10099 / NBRC 100826 / MSB8).